A 363-amino-acid polypeptide reads, in one-letter code: Suberization-associated anionic peroxidase (363 aa).

Positions 1–20 (MGFRLSHLSLALSFVALALA) are cleaved as a signal peptide. N-linked (GlcNAc...) asparagine glycosylation is present at asparagine 36. 2 disulfides stabilise this stretch: cysteine 80–cysteine 159 and cysteine 111–cysteine 116. The Proton acceptor role is filled by histidine 109. Aspartate 110, valine 113, glycine 115, and aspartate 117 together coordinate Ca(2+). Asparagine 126, asparagine 161, and asparagine 199 each carry an N-linked (GlcNAc...) asparagine glycan. 2 disulfide bridges follow: cysteine 166-cysteine 352 and cysteine 245-cysteine 264. A substrate-binding site is contributed by proline 208. N-linked (GlcNAc...) asparagine glycosylation is found at asparagine 213 and asparagine 225. Residue histidine 238 coordinates heme b. Threonine 239 provides a ligand contact to Ca(2+). A glycan (N-linked (GlcNAc...) asparagine) is linked at asparagine 263. The Ca(2+) site is built by aspartate 277, threonine 279, and aspartate 284.

Belongs to the peroxidase family. Classical plant (class III) peroxidase subfamily. Ca(2+) is required as a cofactor. It depends on heme b as a cofactor.

It localises to the secreted. The enzyme catalyses 2 a phenolic donor + H2O2 = 2 a phenolic radical donor + 2 H2O. Removal of H(2)O(2), oxidation of toxic reductants, biosynthesis and degradation of lignin, suberization, auxin catabolism, response to environmental stresses such as wounding, pathogen attack and oxidative stress. These functions might be dependent on each isozyme/isoform in each plant tissue. Its function is as follows. Suggested to catalyze the deposition of the aromatic residues of suberin on the cell wall and thus play a role in cell-suberization. This Solanum tuberosum (Potato) protein is Suberization-associated anionic peroxidase.